We begin with the raw amino-acid sequence, 180 residues long: Non-structural protein 4 (180 aa).

Helical transmembrane passes span 16–36 and 52–72; these read VCVH…VTVI and IVST…AILG.

It is found in the host membrane. In Banna virus (BAV), this protein is Non-structural protein 4 (Segment-11).